Here is a 442-residue protein sequence, read N- to C-terminus: Cytochrome c biogenesis protein CcsB (442 aa).

3 helical membrane passes run 17–37 (LRLAILLLLVIAIASMAGTVI), 76–96 (TPWYLTLLVLFGASLTACTLT), and 162–182 (LGPIVVHASMLLILLGGILGA).

Belongs to the Ccs1/CcsB family. May interact with CcsA.

Its subcellular location is the cellular thylakoid membrane. In terms of biological role, required during biogenesis of c-type cytochromes (cytochrome c6 and cytochrome f) at the step of heme attachment. The sequence is that of Cytochrome c biogenesis protein CcsB from Thermosynechococcus vestitus (strain NIES-2133 / IAM M-273 / BP-1).